Consider the following 1358-residue polypeptide: MSYSYAEKKRIRKEFGVLPHILDVPYLLSIQTESYKKFLTVDAAKGRLHSGLEIVLKQSFPVESKNGQYELHYVDYQIGEPTFDETECQVRGATYDAPLNVKLRLVVYNKDALPNEKIVEDIREEYVYMGDIPLMTTNGTFIINGTERVVVSQLHRSPGVFFSKDDSEEGAFSARIIPYRGSWLDFEFDSKGIIWARIDRKRKFCATVILKALGYTQEQILENFSESKTITFNSKGFALRLDNLSNMKGELLKFDIVDAQDNVIVKKNKKLTSRDVKKIKDAGVDSVAIDFDLVSTLRVAKDIVNEATGEVIAYANDDVTESLLESCVEVGMLELEVIDFITTERGRYISDTLKYDLTRNTDEALVEIYKVLRPGDPPAAASVKALFEGLFFIESRYSLSDIGRMKLNARLGSDKVSKDIYTLENSDIVGVIEELINIRDGKGKVDDIDHLGNRRVRSVGEMVENQFRIGLYRVEKGIRESMSLVHKDKLMPKDIVNSKPITAAIKEFFTSGALSQFMDQDNPLSEVTHKRRISALGPGGLSRDRAGFEVRDVHATHYGRLCPIETPEGPNIGLINSLASYARVNDYGFLEAPYRKVVDGKVTDEIEYLSAIDEDNYVIAQASTKLDENNHFVEDIIQCRSGGEAIFTESSRVQYMDVSAKQMVSAAAALIPFLEHDDANRVLMGANMQRQAVPTLKSEKPLVGTGMEKIVARDSGNCIIARNVGEVAEVDSNRIVIKVDTEKSQTSNLVDIYSLTKFKRSNKNTCINQRPIVNVGDKVEAGDILADGFATDFGELSLGHNLMVAFMPWNGYNFEDSILLSERIVKDDKYTSIHIEEFTCVARDTKLGPEEITADIPNVSESSLAKLDESGIVHIGANVEAGDILVAKITPKAEQQLTPEERLLRAIFNEKASNVVDSSLRMPSGTSGTVINVQVFENDKGGKSKRALKIEKELIDKARKDFDEEFAVIESVVKSSIEQEVVGAKIQKAKGLKKGAILTKEFLATLPLSKWLEISFEDEKLEEKVQNAREYYEEAKIAIDAKFEAKKKSITQSNELSPGVLKTVKVFVAIKKRIQPGDKMAGRHGNKGVVSRVLPVEDMPYMEDGTPVDVCLNPLGIPSRMNIGQILEAHLGLASYGLGKKIEKTLEKTRKAAELRKTLEEVYNSVGDKKVNLEALNDEEILTLCDNLKGGVPIATPVFDGAKEEDIKSLLKIGGFATNGQMKLFDGRTGKPFDRHVTVGYMYMLKLDHLVDDKMHARSTGSYSLVTQQPLGGKAQFGGQRFGEMEVWALQAYGAAYTLREMLTVKSDDIAGRSKMYKNIVDGKLTMNVDVPESFNVLRNEVRALGIDMDFDYSSEEE.

Belongs to the RNA polymerase beta chain family. In terms of assembly, the RNAP catalytic core consists of 2 alpha, 1 beta, 1 beta' and 1 omega subunit. When a sigma factor is associated with the core the holoenzyme is formed, which can initiate transcription.

It catalyses the reaction RNA(n) + a ribonucleoside 5'-triphosphate = RNA(n+1) + diphosphate. Functionally, DNA-dependent RNA polymerase catalyzes the transcription of DNA into RNA using the four ribonucleoside triphosphates as substrates. This Francisella tularensis subsp. holarctica (strain OSU18) protein is DNA-directed RNA polymerase subunit beta.